The primary structure comprises 253 residues: 2-dehydro-3-deoxy-D-gluconate 5-dehydrogenase (253 aa).

14-38 serves as a coordination point for NAD(+); sequence VVTGCDTGLGQGMALGLAQAGCDIV. S145 provides a ligand contact to substrate. Y158 functions as the Proton acceptor in the catalytic mechanism.

This sequence belongs to the short-chain dehydrogenases/reductases (SDR) family. In terms of assembly, homotetramer.

It carries out the reaction 2-dehydro-3-deoxy-D-gluconate + NAD(+) = 3-deoxy-D-glycero-2,5-hexodiulosonate + NADH + H(+). The enzyme catalyses 4-pregnen-20,21-diol-3-one + NAD(+) = 21-hydroxyprogesterone + NADH + H(+). In terms of biological role, catalyzes the reversible reduction of 2,5-diketo-3-deoxygluconate (DKII or 4,6-dihydroxy-2,5-dioxohexanoate) into 2-keto-3-deoxygluconate (KDG or 2-dehydro-3-deoxygluconate) with a concomitant oxidation of NADH. To a lesser extent, can also reduce 5-keto-D-gluconate and oxidize D-gluconate and 1,2-propanediol. Together with KduI, seems to play a role in the catabolism of hexuronates under osmotic stress conditions, substituting for the regular hexuronate degrading enzymes UxaABC and UxuAB whose expression is repressed in these conditions. In vitro, also exhibits NADH-dependent 20-ketosteroid reductase activity against eukaryotic steroid hormone 11-deoxycorticosterone (11-DOC), which is converted into the product 4-pregnen-20,21-diol-3-one. In addition to 11-DOC, five other C21 steroid compounds (11-deoxycortisol, cortisol, corticosterone, cortisone, and 21-hydroxypregnenolone) are reduced by KduD, but steroids lacking the hydroxyl group at C21 position, such as pregnenolone, testosterone propionate, cortisone acetate, or progesterone, cannot be used as substrate. This is 2-dehydro-3-deoxy-D-gluconate 5-dehydrogenase from Escherichia coli (strain K12).